A 185-amino-acid chain; its full sequence is dCTP deaminase (185 aa).

Residues 107–112, 131–133, Gln-152, Tyr-166, and Gln-176 contribute to the dCTP site; these read KSTYAR and TLE. Glu-133 acts as the Proton donor/acceptor in catalysis.

Belongs to the dCTP deaminase family. In terms of assembly, homotrimer.

The catalysed reaction is dCTP + H2O + H(+) = dUTP + NH4(+). Its pathway is pyrimidine metabolism; dUMP biosynthesis; dUMP from dCTP (dUTP route): step 1/2. Functionally, catalyzes the deamination of dCTP to dUTP. The chain is dCTP deaminase from Neorickettsia sennetsu (strain ATCC VR-367 / Miyayama) (Ehrlichia sennetsu).